The following is a 330-amino-acid chain: DNA-directed RNA polymerase subunit alpha (330 aa).

The alpha N-terminal domain (alpha-NTD) stretch occupies residues 1–232 (MAILAFQKPE…SHFSLFAENK (232 aa)). An alpha C-terminal domain (alpha-CTD) region spans residues 248 to 330 (EDSLHMRQLL…DISKYKLDKD (83 aa)).

It belongs to the RNA polymerase alpha chain family. In terms of assembly, homodimer. The RNAP catalytic core consists of 2 alpha, 1 beta, 1 beta' and 1 omega subunit. When a sigma factor is associated with the core the holoenzyme is formed, which can initiate transcription.

The catalysed reaction is RNA(n) + a ribonucleoside 5'-triphosphate = RNA(n+1) + diphosphate. Functionally, DNA-dependent RNA polymerase catalyzes the transcription of DNA into RNA using the four ribonucleoside triphosphates as substrates. In Porphyromonas gingivalis (strain ATCC BAA-308 / W83), this protein is DNA-directed RNA polymerase subunit alpha.